A 798-amino-acid polypeptide reads, in one-letter code: Nuclear intron maturase 4, mitochondrial (798 aa).

Residues 1-16 (MFRKRNLVLDLLRRCY) constitute a mitochondrion transit peptide. The segment at 578–665 (VVAPTNAIGR…AAKYRIHENE (88 aa)) is intron maturase type-2. A THAP-type zinc finger spans residues 729–778 (CFVIGCSMAAPAVYTLHAMERQKFPGWKTGFSVCIPSSLNGRRIGLCKQH).

Belongs to the plant nuclear intron maturase (nMat) family.

It localises to the mitochondrion. The protein resides in the plastid. Its subcellular location is the chloroplast. Nuclear-encoded maturase required for splicing of group-II introns in mitochondria. Involved in NAD1 pre-mRNA processing and maturation of introns 1, 3 and 4. Necessary for mitochondrial biogenesis during early developmental stages. Essential for respiratory holocomplex I biogenesis in mitochondria. The sequence is that of Nuclear intron maturase 4, mitochondrial from Arabidopsis thaliana (Mouse-ear cress).